A 459-amino-acid polypeptide reads, in one-letter code: Ribulose bisphosphate carboxylase (459 aa).

N111 is a substrate binding site. The active-site Proton acceptor is the K166. Substrate is bound at residue K168. 3 residues coordinate Mg(2+): K191, D193, and E194. K191 is subject to N6-carboxylysine. The Proton acceptor role is filled by H287. Positions 288, 321, and 368 each coordinate substrate.

The protein belongs to the RuBisCO large chain family. Type II subfamily. As to quaternary structure, homodimer. It depends on Mg(2+) as a cofactor.

The enzyme catalyses 2 (2R)-3-phosphoglycerate + 2 H(+) = D-ribulose 1,5-bisphosphate + CO2 + H2O. It carries out the reaction D-ribulose 1,5-bisphosphate + O2 = 2-phosphoglycolate + (2R)-3-phosphoglycerate + 2 H(+). Functionally, ruBisCO catalyzes two reactions: the carboxylation of D-ribulose 1,5-bisphosphate, the primary event in carbon dioxide fixation, as well as the oxidative fragmentation of the pentose substrate. Both reactions occur simultaneously and in competition at the same active site. This Dechloromonas aromatica (strain RCB) protein is Ribulose bisphosphate carboxylase.